Reading from the N-terminus, the 742-residue chain is Photosystem I P700 chlorophyll a apoprotein A2 (742 aa).

8 consecutive transmembrane segments (helical) span residues 46 to 69 (LFST…FHIA), 135 to 158 (LFQA…LHLQ), 175 to 199 (LNHH…HVAI), 273 to 291 (IAHH…GHMY), 336 to 359 (LHFQ…QHMG), 375 to 401 (SALY…IFFV), 423 to 445 (ALIS…IYVH), and 525 to 543 (FLVH…LILI). The [4Fe-4S] cluster site is built by C567 and C576. 2 helical membrane-spanning segments follow: residues 583 to 604 (AMYL…YWHW) and 651 to 673 (LSPW…MFLI). Divinyl chlorophyll a-binding residues include H662, M670, and Y678. Phylloquinone is bound at residue W679. Residues 715-735 (LVGLAHFTIGNILTFGAFVIA) traverse the membrane as a helical segment.

The protein belongs to the PsaA/PsaB family. As to quaternary structure, the PsaA/B heterodimer binds the P700 divinyl chlorophyll special pair and subsequent electron acceptors. PSI consists of a core antenna complex that captures photons, and an electron transfer chain that converts photonic excitation into a charge separation. The cyanobacterial PSI reaction center is composed of one copy each of PsaA,B,C,D,E,F,I,J,K,L,M and X, and forms trimeric complexes. PSI electron transfer chain: 5 divinyl chlorophyll a, 1 divinyl chlorophyll a', 2 phylloquinones and 3 4Fe-4S clusters. PSI core antenna: 90 divinyl chlorophyll a, 22 carotenoids, 3 phospholipids and 1 galactolipid. P700 is a divinyl chlorophyll a/divinyl chlorophyll a' dimer, A0 is one or more divinyl chlorophyll a, A1 is one or both phylloquinones and FX is a shared 4Fe-4S iron-sulfur center. serves as cofactor.

It localises to the cellular thylakoid membrane. The catalysed reaction is reduced [plastocyanin] + hnu + oxidized [2Fe-2S]-[ferredoxin] = oxidized [plastocyanin] + reduced [2Fe-2S]-[ferredoxin]. Functionally, psaA and PsaB bind P700, the primary electron donor of photosystem I (PSI), as well as the electron acceptors A0, A1 and FX. PSI is a plastocyanin/cytochrome c6-ferredoxin oxidoreductase, converting photonic excitation into a charge separation, which transfers an electron from the donor P700 chlorophyll pair to the spectroscopically characterized acceptors A0, A1, FX, FA and FB in turn. Oxidized P700 is reduced on the lumenal side of the thylakoid membrane by plastocyanin or cytochrome c6. In Prochlorococcus marinus (strain MIT 9301), this protein is Photosystem I P700 chlorophyll a apoprotein A2.